A 45-amino-acid chain; its full sequence is Unknown protein from spots 23/28/205 of 2D-PAGE of thylakoid (45 aa).

The protein localises to the plastid. Its subcellular location is the chloroplast thylakoid. The chain is Unknown protein from spots 23/28/205 of 2D-PAGE of thylakoid from Pisum sativum (Garden pea).